The sequence spans 688 residues: NADPH-dependent diflavin oxidoreductase 1 (688 aa).

Residues 26–76 (HLHRHADTSPTNQHNTSHKMTTTEPIHVTTGSGESRDHTEPRHVTPTSPNA) form a disordered region. A compositionally biased stretch (polar residues) spans 33–58 (TSPTNQHNTSHKMTTTEPIHVTTGSG). Residues 59-68 (ESRDHTEPRH) are compositionally biased toward basic and acidic residues. The region spanning 82 to 227 (ITIAYATETG…MYNEWQARFC (146 aa)) is the Flavodoxin-like domain. FMN is bound by residues 88–93 (TETGNA), 136–139 (STTG), 174–183 (LGDSSYPRFN), and D209. One can recognise an FAD-binding FR-type domain in the interval 277–543 (KDVLQGTVVG…KHSTPIPDLD (267 aa)). FAD is bound by residues R453, 483-486 (RLFS), and 515-518 (GVLT). NADP(+) contacts are provided by residues T554, 607 to 608 (SR), and 613 to 617 (GGYVQ). W688 is an FAD binding site.

Belongs to the NADPH-dependent diflavin oxidoreductase NDOR1 family. It in the N-terminal section; belongs to the flavodoxin family. This sequence in the C-terminal section; belongs to the flavoprotein pyridine nucleotide cytochrome reductase family. In terms of assembly, interacts with DRE2; as part of the cytosolic iron-sulfur (Fe-S) protein assembly (CIA) machinery. FAD is required as a cofactor. The cofactor is FMN.

It is found in the cytoplasm. The protein localises to the mitochondrion. The catalysed reaction is 2 oxidized [2Fe-2S]-[protein] + NADPH = 2 reduced [2Fe-2S]-[protein] + NADP(+) + H(+). Functionally, NADPH-dependent reductase which is a central component of the cytosolic iron-sulfur (Fe-S) protein assembly (CIA) machinery. Transfers electrons from NADPH via its FAD and FMN prosthetic groups to the [2Fe-2S] cluster of DRE2, another key component of the CIA machinery. In turn, this reduced cluster provides electrons for assembly of cytosolic iron-sulfur cluster proteins. Positively controls H(2)O(2)-induced cell death. The protein is NADPH-dependent diflavin oxidoreductase 1 of Yarrowia lipolytica (strain CLIB 122 / E 150) (Yeast).